The primary structure comprises 287 residues: Centromere protein P (287 aa).

Residues 1-37 (MDNSVYQVYEDEIQLLEEEIKLLSDKYEDIQQESTFF) adopt a coiled-coil conformation.

Belongs to the CENP-P/CTF19 family. Component of the CENPA-HI complex, at least composed of CENPH, CENPI, CENPK, CENPL, CENPM, CENPO and CENPP.

The protein localises to the nucleus. The protein resides in the chromosome. Its subcellular location is the centromere. Functionally, component of the CENPA-HI complex, a centromeric complex involved in assembly of kinetochore proteins, mitotic progression and chromosome segregation. This chain is Centromere protein P (CENPP), found in Gallus gallus (Chicken).